Reading from the N-terminus, the 182-residue chain is Photosystem I assembly protein Ycf4 (182 aa).

The next 2 membrane-spanning stretches (helical) occupy residues 22-42 and 63-83; these read WSSV…SSYL and VMCF…LTIF.

This sequence belongs to the Ycf4 family.

The protein resides in the plastid. The protein localises to the chloroplast thylakoid membrane. Functionally, seems to be required for the assembly of the photosystem I complex. The chain is Photosystem I assembly protein Ycf4 from Oltmannsiellopsis viridis (Marine flagellate).